The following is a 309-amino-acid chain: Malate dehydrogenase (309 aa).

NAD(+) contacts are provided by residues 9 to 14 (GAGFVG) and Asp33. Substrate is bound by residues Arg82 and Arg88. NAD(+) is bound by residues Asn95 and 118-120 (VNN). Substrate contacts are provided by Asn120 and Arg151. The active-site Proton acceptor is His175.

Belongs to the LDH/MDH superfamily. MDH type 3 family.

The enzyme catalyses (S)-malate + NAD(+) = oxaloacetate + NADH + H(+). In terms of biological role, catalyzes the reversible oxidation of malate to oxaloacetate. The polypeptide is Malate dehydrogenase (Roseiflexus castenholzii (strain DSM 13941 / HLO8)).